Consider the following 248-residue polypeptide: Isopentenyl phosphate kinase (248 aa).

Residue 7-11 participates in ATP binding; sequence KLGGS. Residue G49 participates in substrate binding. ATP is bound at residue G50. Positions 54 and 152 each coordinate substrate. ATP contacts are provided by G209 and K213.

It belongs to the isopentenyl phosphate kinase family. In terms of assembly, homodimer.

It catalyses the reaction isopentenyl phosphate + ATP = isopentenyl diphosphate + ADP. In terms of biological role, catalyzes the phosphorylation of isopentenyl phosphate (IP) to isopentenyl diphosphate (IPP). Functions in an alternate mevalonate (MVA) pathway leading to IPP, a key precursor for the biosynthesis of isoprenoid compounds such as archaeal membrane lipids. This Haloferax volcanii (strain ATCC 29605 / DSM 3757 / JCM 8879 / NBRC 14742 / NCIMB 2012 / VKM B-1768 / DS2) (Halobacterium volcanii) protein is Isopentenyl phosphate kinase.